The sequence spans 229 residues: Leucyl/phenylalanyl-tRNA--protein transferase (229 aa).

This sequence belongs to the L/F-transferase family.

The protein localises to the cytoplasm. The enzyme catalyses N-terminal L-lysyl-[protein] + L-leucyl-tRNA(Leu) = N-terminal L-leucyl-L-lysyl-[protein] + tRNA(Leu) + H(+). The catalysed reaction is N-terminal L-arginyl-[protein] + L-leucyl-tRNA(Leu) = N-terminal L-leucyl-L-arginyl-[protein] + tRNA(Leu) + H(+). It catalyses the reaction L-phenylalanyl-tRNA(Phe) + an N-terminal L-alpha-aminoacyl-[protein] = an N-terminal L-phenylalanyl-L-alpha-aminoacyl-[protein] + tRNA(Phe). Functions in the N-end rule pathway of protein degradation where it conjugates Leu, Phe and, less efficiently, Met from aminoacyl-tRNAs to the N-termini of proteins containing an N-terminal arginine or lysine. This chain is Leucyl/phenylalanyl-tRNA--protein transferase, found in Pseudomonas syringae pv. syringae (strain B728a).